The primary structure comprises 388 residues: P2X purinoceptor 4 (388 aa).

The Cytoplasmic segment spans residues 1–33 (MAGCCSVLGSFLFEYDTPRIVLIRSRKVGLMNR). A helical transmembrane segment spans residues 34-54 (VVQLLILAYVIGWVFVWEKGY). At 55-338 (QETDSVVSSV…KFDIIPTMIN (284 aa)) the chain is on the extracellular side. ATP contacts are provided by Lys67 and Lys69. 2 residues coordinate CTP: Lys67 and Lys69. N-linked (GlcNAc...) asparagine glycans are attached at residues Asn75, Asn110, Asn131, Asn153, and Asn184. Disulfide bonds link Cys116/Cys165, Cys126/Cys149, and Cys132/Cys159. Thr186 and Leu188 together coordinate ATP. Thr186 serves as a coordination point for CTP. Residues Asn199 and Asn208 are each glycosylated (N-linked (GlcNAc...) asparagine). Disulfide bonds link Cys217-Cys227 and Cys261-Cys270. 3 residues coordinate ATP: Asn293, Arg295, and Lys313. CTP-binding residues include Asn293, Arg295, and Lys313. The chain crosses the membrane as a helical span at residues 339–359 (VGSGLALLGVATVLCDVIVLY). The Cytoplasmic portion of the chain corresponds to 360 to 388 (CMKKRYYYRDKKYKYVEDYEQGLSGEMNQ).

The protein belongs to the P2X receptor family. In terms of assembly, functional P2RXs are organized as homomeric and heteromeric trimers. Functional P2XRs are organized as homomeric and heteromeric trimers. Forms heterotrimer with P2RX1. Interacts with P2RX7 (via C-terminus); this interaction is functional only in the presence of ATP. Forms heterotrimer with P2RX4; functional differences between homomeric P2RX4 and P2RX4/6 heterotrimer are minor. Interacts with AP1M2.

The protein localises to the cell membrane. The protein resides in the lysosome membrane. It catalyses the reaction K(+)(in) = K(+)(out). It carries out the reaction Na(+)(in) = Na(+)(out). The enzyme catalyses Ca(2+)(in) = Ca(2+)(out). Its activity is regulated as follows. Activated by ATP. pH-dependent and inhibited by acidic pH. Its function is as follows. ATP-gated nonselective transmembrane cation channel permeable to potassium, sodium and calcium. CTP, but not GTP or UTP, functions as a weak affinity agonist for P2RX4. Activated by extracellularly released ATP, it plays multiple role in immunity and central nervous system physiology. Plays a key role in initial steps of T-cell activation and Ca(2+) microdomain formation. Also participates in basal T-cell activity without TCR/CD3 stimulation. Promotes the differentiation and activation of Th17 cells via expression of retinoic acid-related orphan receptor C/RORC. Upon activation, drives microglia motility via the PI3K/Akt pathway. Could also function as an ATP-gated cation channel of lysosomal membranes. The sequence is that of P2X purinoceptor 4 (P2rx4) from Mus musculus (Mouse).